The following is a 220-amino-acid chain: Claudin-3 (220 aa).

Over 1–8 the chain is Cytoplasmic; sequence MSMGLEIT. Residues 9-29 traverse the membrane as a helical segment; sequence GTALAVLGWLGTIVCCALPMW. Topologically, residues 30 to 80 are extracellular; it reads RVSAFIGSNIITSQNIWEGLWMNCVVQSTGQMQCKVYDSLLALPQDLQAAR. The chain crosses the membrane as a helical span at residues 81 to 101; it reads ALIVVAILLAAFGLLVALVGA. Topologically, residues 102–115 are cytoplasmic; that stretch reads QCTNCVQDDTAKAK. A helical membrane pass occupies residues 116–136; it reads ITIVAGVLFLLAALLTLVPVS. At 137 to 159 the chain is on the extracellular side; that stretch reads WSANTIIRDFYNPVVPEAQKREM. The chain crosses the membrane as a helical span at residues 160–180; the sequence is GAGLYVGWAAAALQLLGGALL. The Cytoplasmic portion of the chain corresponds to 181–220; sequence CCSCPPREKKYTATKVVYSAPRSTGPGASLGTGYDRKDYV. A Phosphotyrosine modification is found at Y198. A phosphoserine mark is found at S199 and S209. The interactions with TJP1, TJP2 and TJP3 stretch occupies residues 219-220; the sequence is YV.

The protein belongs to the claudin family. As to quaternary structure, can form homo- and heteropolymers with other CLDN. Homopolymers interact with CLDN1 and CLDN2 homopolymers. Interacts in cis (within the same plasma membrane) with CLDN19. Directly interacts with TJP1/ZO-1, TJP2/ZO-2 and TJP3/ZO-3.

It localises to the cell junction. The protein localises to the tight junction. Its subcellular location is the cell membrane. Functionally, barrier-forming claudin. Plays a major role in tight junction-specific obliteration of the intercellular space, through calcium-independent cell-adhesion activity. In Homo sapiens (Human), this protein is Claudin-3 (CLDN3).